The primary structure comprises 57 residues: Benzylsuccinate synthase gamma subunit (57 aa).

Heterohexamer composed of 2 alpha subunits, 2 beta subunits and 2 gamma subunits.

It carries out the reaction toluene + fumarate = 2-benzylsuccinate. It participates in xenobiotic degradation; toluene degradation. With respect to regulation, activated by the benzylsuccinate synthase activating enzyme BssD. Rapidly inactivated by oxygen. Functionally, catalyzes the addition of fumarate to the methyl group of toluene, leading to the formation of benzylsuccinate. The protein is Benzylsuccinate synthase gamma subunit (bssC) of Thauera aromatica.